The chain runs to 308 residues: Aspartate carbamoyltransferase catalytic subunit (308 aa).

Arg-57 and Thr-58 together coordinate carbamoyl phosphate. Residue Lys-86 coordinates L-aspartate. 3 residues coordinate carbamoyl phosphate: Arg-107, His-135, and Gln-138. The L-aspartate site is built by Arg-167 and Arg-228. Carbamoyl phosphate-binding residues include Leu-267 and Pro-268.

This sequence belongs to the aspartate/ornithine carbamoyltransferase superfamily. ATCase family. Heterooligomer of catalytic and regulatory chains.

It catalyses the reaction carbamoyl phosphate + L-aspartate = N-carbamoyl-L-aspartate + phosphate + H(+). Its pathway is pyrimidine metabolism; UMP biosynthesis via de novo pathway; (S)-dihydroorotate from bicarbonate: step 2/3. Catalyzes the condensation of carbamoyl phosphate and aspartate to form carbamoyl aspartate and inorganic phosphate, the committed step in the de novo pyrimidine nucleotide biosynthesis pathway. In Methanosarcina acetivorans (strain ATCC 35395 / DSM 2834 / JCM 12185 / C2A), this protein is Aspartate carbamoyltransferase catalytic subunit.